The following is a 1958-amino-acid chain: MMATRRTGLSEGDGDKLKACEVSKNKDGKEQSETVSLSEDETFSWPGPKTVTLKRTSQGFGFTLRHFIVYPPESAIQFSYKDEENGNRGGKQRNRLEPMDTIFVKQVKEGGPAFEAGLCTGDRIIKVNGESVIGKTYSQVIALIQNSDTTLELSVMPKDEDILQVLQFTKDVTALAYSQDAYLKGNEAYSGNARNIPEPPPICYPWLPSAPSAMAQPVEISPPDSSLSKQQTSTPVLTQPGRAYRMEIQVPPSPTDVAKSNTAVCVCNESVRTVIVPSEKVVDLLSNRNNHTGPSHRTEEVRYGVSEQTSLKTVSRTTSPPLSIPTTHLIHQPAGSRSLEPSGILLKSGNYSGHSDGISSSRSQAVEAPSVSVNHYSPNSHQHIDWKNYKTYKEYIDNRRLHIGCRTIQERLDSLRAASQSTTDYNQVVPNRTTLQGRRRSTSHDRVPQSVQIRQRSVSQERLEDSVLMKYCPRSASQGALTSPSVSFSNHRTRSWDYIEGQDETLENVNSGTPIPDSNGEKKQTYKWSGFTEQDDRRGICERPRQQEIHKSFRGSNFTVAPSVVNSDNRRMSGRGVGSVSQFKKIPPDLKTLQSNRNFQTTCGMSLPRGISQDRSPLVKVRSNSLKAPSTHVTKPSFSQKSFVSIKDQRPVNHLHQNSLLNQQTWVRTDSAPDQQVETGKSPSLSGASAKPAPQSSENAGTSDLELPVSQRNQDLSLQEAETEQSDTLDNKEAVILREKPPSGRQTPQPLRHQSYILAVNDQETGSDTTCWLPNDARREVHIKRMEERKASSTSPPGDSLASIPFIDEPTSPSIDHDIAHIPASAVISASTSQVPSIATVPPCLTTSAPLIRRQLSHDHESVGPPSLDAQPNSKTERSKSYDEGLDDYREDAKLSFKHVSSLKGIKIADSQKSSEDSGSRKDSSSEVFSDAAKEGWLHFRPLVTDKGKRVGGSIRPWKQMYVVLRGHSLYLYKDKREQTTPSEEEQPISVNACLIDISYSETKRKNVFRLTTSDCECLFQAEDRDDMLAWIKTIQESSNLNEEDTGVTNRDLISRRIKEYNNLMSKAEQLPKTPRQSLSIRQTLLGAKSEPKTQSPHSPKEESERKLLSKDDTSPPKDKGTWRKGIPSIMRKTFEKKPTATGTFGVRLDDCPPAHTNRYIPLIVDICCKLVEERGLEYTGIYRVPGNNAAISSMQEELNKGMADIDIQDDKWRDLNVISSLLKSFFRKLPEPLFTNDKYADFIEANRKEDPLDRLKTLKRLIHDLPEHHYETLKFLSAHLKTVAENSEKNKMEPRNLAIVFGPTLVRTSEDNMTHMVTHMPDQYKIVETLIQHHDWFFTEEGAEEPLTTVQEESTVDSQPVPNIDHLLTNIGRTGVSPGDVSDSATSDSTKSKGSWGSGKDQYSRELLVSSIFAAASRKRKKPKEKAQPSSSEDELDNVFFKKENVEQCHNDTKEESKKESETLGRKQKIIIAKENSTRKDPSTTKDEKISLGKESTPSEEPSPPHNSKHNKSPTLSCRFAILKESPRSLLAQKSSHLEETGSDSGTLLSTSSQASLARFSMKKSTSPETKHSEFLANVSTITSDYSTTSSATYLTSLDSSRLSPEVQSVAESKGDEADDERSELISEGRPVETDSESEFPVFPTALTSERLFRGKLQEVTKSSRRNSEGSELSCTEGSLTSSLDSRRQLFSSHKLIECDTLSRKKSARFKSDSGSLGDAKNEKEAPSLTKVFDVMKKGKSTGSLLTPTRGESEKQEPTWKTKIADRLKLRPRAPADDMFGVGNHKVNAETAKRKSIRRRHTLGGHRDATEISVLNFWKVHEQSGERESELSAVNRLKPKCSAQDLSISDWLARERLRTSTSDLSRGEIGDPQTENPSTREIATTDTPLSLHCNTGSSSSTLASTNRPLLSIPPQSPDQINGESFQNVSKNASSAANAQPHKLSETPGSKAEFHPCL.

The segment at 1 to 42 (MMATRRTGLSEGDGDKLKACEVSKNKDGKEQSETVSLSEDET) is disordered. Over residues 13-32 (DGDKLKACEVSKNKDGKEQS) the composition is skewed to basic and acidic residues. Phosphoserine is present on residues S36 and S57. The 110-residue stretch at 50-159 (TVTLKRTSQG…TLELSVMPKD (110 aa)) folds into the PDZ domain. Composition is skewed to polar residues over residues 286–295 (SNRNNHTGPS), 306–325 (SEQT…LSIP), and 418–436 (ASQS…TTLQ). Disordered stretches follow at residues 286–325 (SNRN…LSIP) and 418–458 (ASQS…QRSV). Residues 448-458 (PQSVQIRQRSV) show a composition bias toward low complexity. S459 carries the post-translational modification Phosphoserine. Omega-N-methylarginine is present on residues R554 and R575. Residues S612, S616, and S625 each carry the phosphoserine modification. Positions 659-687 (SLLNQQTWVRTDSAPDQQVETGKSPSLSG) are enriched in polar residues. The tract at residues 659–751 (SLLNQQTWVR…PSGRQTPQPL (93 aa)) is disordered. S717 carries the post-translational modification Phosphoserine. Over residues 729-742 (LDNKEAVILREKPP) the composition is skewed to basic and acidic residues. T747 is subject to Phosphothreonine. A phosphoserine mark is found at S857, S862, and S881. Positions 859–885 (DHESVGPPSLDAQPNSKTERSKSYDEG) are disordered. The segment covering 875–885 (KTERSKSYDEG) has biased composition (basic and acidic residues). Position 882 is a phosphotyrosine (Y882). 5 positions are modified to phosphoserine: S924, S926, S954, S1099, and S1115. An interaction with ARF1 and ARF6 region spans residues 930–1097 (SDAAKEGWLH…AKSEPKTQSP (168 aa)). The region spanning 931–1040 (DAAKEGWLHF…WIKTIQESSN (110 aa)) is the PH domain. The segment at 1086 to 1133 (LGAKSEPKTQSPHSPKEESERKLLSKDDTSPPKDKGTWRKGIPSIMRK) is disordered. Basic and acidic residues predominate over residues 1099–1122 (SPKEESERKLLSKDDTSPPKDKGT). A Rho-GAP domain is found at 1147–1339 (VRLDDCPPAH…TLIQHHDWFF (193 aa)). 4 disordered regions span residues 1348–1401 (LTTV…GSGK), 1418–1575 (SRKR…KHSE), 1598–1642 (SLDS…SEFP), and 1655–1686 (RGKL…SSLD). Over residues 1349-1362 (TTVQEESTVDSQPV) the composition is skewed to polar residues. The segment covering 1383-1401 (SDSATSDSTKSKGSWGSGK) has biased composition (low complexity). Residues S1418, S1432, and S1433 each carry the phosphoserine modification. Basic and acidic residues-rich tracts occupy residues 1441–1466 (FFKK…ETLG) and 1477–1493 (NSTR…KISL). Residue K1444 forms a Glycyl lysine isopeptide (Lys-Gly) (interchain with G-Cter in SUMO) linkage. S1504 is subject to Phosphoserine. The residue at position 1516 (T1516) is a Phosphothreonine. S1527 is subject to Phosphoserine. Positions 1544-1559 (SDSGTLLSTSSQASLA) are enriched in low complexity. Residues 1592–1861 (SATYLTSLDS…WLARERLRTS (270 aa)) form an interaction with CTNNA1 region. A compositionally biased stretch (polar residues) spans 1603-1612 (RLSPEVQSVA). Basic and acidic residues predominate over residues 1624-1634 (SELISEGRPVE). S1669 is subject to Phosphoserine. Positions 1671–1686 (GSELSCTEGSLTSSLD) are enriched in polar residues. A Phosphothreonine modification is found at T1682. S1742 carries the phosphoserine modification. Residues 1860–1958 (TSTSDLSRGE…GSKAEFHPCL (99 aa)) are disordered. Positions 1874–1909 (QTENPSTREIATTDTPLSLHCNTGSSSSTLASTNRP) are enriched in polar residues. A Phosphoserine modification is found at S1917. The segment covering 1918–1931 (PDQINGESFQNVSK) has biased composition (polar residues).

In terms of assembly, interacts with GTP-bound ARF1 and ARF6. Interacts with CTNNA1. Sumoylated with SUMO2 and SUMO3 in proliferating lymphocytes. As to expression, widely expressed with higher expression in brain, heart, skeletal muscle and placenta.

It localises to the golgi apparatus membrane. The protein resides in the cell junction. Its subcellular location is the cytoplasmic vesicle membrane. The protein localises to the cytoplasm. It is found in the cytoskeleton. Its function is as follows. Functions as a GTPase-activating protein (GAP) for RHOA and CDC42. Downstream partner of ARF1 which may control Golgi apparatus structure and function. Also required for CTNNA1 recruitment to adherens junctions. This chain is Rho GTPase-activating protein 21 (ARHGAP21), found in Homo sapiens (Human).